Here is a 531-residue protein sequence, read N- to C-terminus: uncharacterized protein (531 aa).

The first 28 residues, 1-28 (MNTKGIIAKLTAGALIANLLICPANTLA), serve as a signal peptide directing secretion. 3 consecutive SLH domains span residues 29 to 85 (EKKT…QINK), 86 to 149 (QAKP…IGDL), and 150 to 210 (PTQF…SKRM). The region spanning 335 to 517 (IIIDPGHGGI…AAEAIYAGIL (183 aa)) is the MurNAc-LAA domain.

In the C-terminal section; belongs to the N-acetylmuramoyl-L-alanine amidase 3 family.

It localises to the secreted. Its subcellular location is the cell wall. The protein resides in the S-layer. This is an uncharacterized protein from Bacillus anthracis.